A 151-amino-acid polypeptide reads, in one-letter code: Small ribosomal subunit protein uS13 (151 aa).

Belongs to the universal ribosomal protein uS13 family. As to quaternary structure, part of the 30S ribosomal subunit. Forms a loose heterodimer with protein S19. Forms two bridges to the 50S subunit in the 70S ribosome.

Its function is as follows. Located at the top of the head of the 30S subunit, it contacts several helices of the 16S rRNA. In the 70S ribosome it contacts the 23S rRNA (bridge B1a) and protein L5 of the 50S subunit (bridge B1b), connecting the 2 subunits; these bridges are implicated in subunit movement. The chain is Small ribosomal subunit protein uS13 from Staphylothermus marinus (strain ATCC 43588 / DSM 3639 / JCM 9404 / F1).